The primary structure comprises 266 residues: MTHANTTTPPFIAVVPARLASTRLPNKPLADIGGKPMVVRVAERARESGAQQVLVASDAQAVLDAARAHGFEAVLTRADHPSGTDRLAEVAAQFGWSDDTIVVNVQGDEPLIDPALVCGVASHLAASGGCAIATAAHPITDPAEIFNPNVVKVVLDARGVALYFSRAPIPWARDAYQPHWPNVAAMPTPPAPAVVHRHIGLYAYRAQFLRTYPSLAISPIEQVEALEQLRAMWHGERIAVLVTHDVPLPGVDTPADLARVQALFGS.

It belongs to the KdsB family.

It is found in the cytoplasm. The catalysed reaction is 3-deoxy-alpha-D-manno-oct-2-ulosonate + CTP = CMP-3-deoxy-beta-D-manno-octulosonate + diphosphate. Its pathway is nucleotide-sugar biosynthesis; CMP-3-deoxy-D-manno-octulosonate biosynthesis; CMP-3-deoxy-D-manno-octulosonate from 3-deoxy-D-manno-octulosonate and CTP: step 1/1. The protein operates within bacterial outer membrane biogenesis; lipopolysaccharide biosynthesis. In terms of biological role, activates KDO (a required 8-carbon sugar) for incorporation into bacterial lipopolysaccharide in Gram-negative bacteria. The protein is 3-deoxy-manno-octulosonate cytidylyltransferase of Paraburkholderia xenovorans (strain LB400).